A 1920-amino-acid polypeptide reads, in one-letter code: MSNESSQLAASSRLPTTTNQVKTVITDTPFVSTALEERRSRSLRARPSLSSPSMGIPSTTHPNGHATQSKGMEAISQGLRQEAVIVRREKRITEKERELKEVVESHDGLIREKFHLERFVTLLEGWNPEQAKLDNSPVFLQWKDSKHNLLNLLPDEPAISASSQAGPSRPRSSLPSRTTRRKAHEQSELLAHVVAPVAKPPAFAPSTKGKERVGDELHAKTKGKGKGLAEQSLIPSPAEGALHTKGGKRKVGDVTTDMLPPPVPDKRSRGSRRATMGAPLPQIDQNEEVGLDSQATHGGKAKRRGRISLPDLPTSKKLRTAKRASAVSSESASPVVEAPTLERLASPSPLSTPVPLPTFAHLPFPPAPHRIRKRIVGPRTIRYTDPSQRPPAPKYGGDITPIIESYVNINDTGPPPEMKTLEARAKKEGYLLARVMYLKSHGRLQRLVDEEDGSNLFSTTTTSNSHAKIIRIPPRKTDYHDTLIAHMVQVRNAMLNVAKSKPVTCKKVARMVQAYWENIEGKEERERLAEEKERRRMGKEIIKSLRKRWALAVKVVRAKILEAQKQEQDRLGKEHLQNILQRSTGLLEAQIQGSNDSGEEEGEDSTSDNTDDSEGDDETNTLLPLTSISPEPVIGDDEEDVDVHDDDDEQQGEEDTSHKEDESDASDTESDENSMSEHNQDLRFLISDDVLNEDPMSTGRFAEEDRGSSDTEQLTDNKNDGEEPKETAVQAAFDGSDDVNRLEEPHNPVSSTANIGNFALLESSSAEVSDASCPATMPILVRQSPKTCSQPRTRKVKLSTLSLSSDPDPDINDPEFKARLEDSNQDDQDEELDLEMEEADSAGRESGEGNRDSEDEGLLADADLPIEVLLRRYGYPVPEGEGAVNGEPEQSESKGREQAAPTSTVSETLPSTKLSLAQPANQTDQSLTDTALPEPRVPEQLIISGKRQRRKKEIWTPDDSEPQHLVGKKRIKKVEIVEKVEADVHQNGDGLVIVEEETMGDEDNDDSKVGQEEEDGHEYDSEEEYDEDEDEEEEGAKEDNVDWDDRQDKEGDIGPRVRQPFLLRGTLRPYQQAGLEWLASLWSNNMNGILADEMGLGKTIQTIALLGHLACDKGVWGQHLIIVPTSVILNWEMEFKKFLPGMKVLTYYGNQKERKEKRVGWHTENTWQVCITSYQIVLADQHIFRRKNWCYMILDEAHNIKNFRSQRWQTLLGFKAQRRLLLTGTPLQNNLMELWSLLYFLMPGGIGADATAVVGFANHKEFMEWFSNPMDKAIETGDAMDEETLETVAKLHTLLRPFILRRLKSEVETQLPGKFEHVVYCRLSKRQRFLYDEFMSRASTHEALTTGGYLGVMNTLMQLRKVCNHPDLFEMRPVKTSFAMDNVARDFEPSDILIRKRLLAEEDERRIDALAIGFGVAHNEAMSGWVARARQTYDASDKLPYAASPLRRGKLSAPPPKDTRSVELWLKYRVWAEEEFSKRRWESIRATNRQRCGISPIYGSTFLSLLGNLPNFLLPQDVQSRREETFADFTPPAAKFITSLPERAKSLEDVIDRFAVIPPNAVARNLATYALPGLEPISHPALTDPAFDTLHRSSVKLQIAFPDASLLQYDCGKLQKLFEMLRDLKSEGHRVLIFTQMTRVLDILEMFLSHNGHRYLRLDGSTKIEDRQVLTERFNSDSRIFVFIASSRSGGVGINLTGADTVFFYDSDWNPSMDRQCMDRAHRIGQTREVHIYRFVSSHTVEENMLRKAEQKRLLDKMVIQEGGFNNDWWGRVGWKDMFGDVPGITDVSGVVEKSGEGIIDIQVEGTPVAEDVEVTRPRAGEERELARALAEVEDEEDAQAARMAQGEGELDLQEFEEGPKAVAKRVRVFEPENSGTPVTTEAGETGDVVEEYDDEPGSVEEYMLKWVEEDWDYFSPYRA.

Composition is skewed to polar residues over residues 1–31 (MSNE…TPFV) and 56–68 (IPST…HATQ). Disordered regions lie at residues 1-68 (MSNE…HATQ) and 158-350 (AISA…PSPL). Low complexity predominate over residues 167 to 177 (PSRPRSSLPSR). The segment covering 208 to 219 (KGKERVGDELHA) has biased composition (basic and acidic residues). Positions 324 to 339 (ASAVSSESASPVVEAP) are enriched in low complexity. The 74-residue stretch at 467 to 540 (AKIIRIPPRK…EKERRRMGKE (74 aa)) folds into the HSA domain. Disordered regions lie at residues 590–727 (QIQG…PKET), 783–862 (QSPK…LADA), 876–966 (PVPE…QHLV), and 988–1055 (GDGL…DIGP). Composition is skewed to acidic residues over residues 597-619 (SGEE…DDET), 634-654 (IGDD…QGEE), and 662-674 (ESDA…DENS). Basic and acidic residues predominate over residues 701 to 726 (FAEEDRGSSDTEQLTDNKNDGEEPKE). The span at 823–840 (SNQDDQDEELDLEMEEAD) shows a compositional bias: acidic residues. Positions 841-852 (SAGRESGEGNRD) are enriched in basic and acidic residues. Positions 900-929 (APTSTVSETLPSTKLSLAQPANQTDQSLTD) are enriched in polar residues. 2 stretches are compositionally biased toward acidic residues: residues 994-1005 (VEEETMGDEDND) and 1012-1036 (EEED…EEGA). Positions 1037-1055 (KEDNVDWDDRQDKEGDIGP) are enriched in basic and acidic residues. A Helicase ATP-binding domain is found at 1079 to 1244 (ASLWSNNMNG…WSLLYFLMPG (166 aa)). ATP is bound at residue 1092-1099 (DEMGLGKT). Positions 1195–1198 (DEAH) match the DEAH box motif. In terms of domain architecture, Helicase C-terminal spans 1613–1766 (KLQKLFEMLR…KMVIQEGGFN (154 aa)).

It belongs to the SNF2/RAD54 helicase family. SWR1 subfamily. Component of the SWR1 chromatin-remodeling complex.

It is found in the nucleus. It catalyses the reaction ATP + H2O = ADP + phosphate + H(+). Functionally, catalytic component of the SWR1 complex which mediates the ATP-dependent exchange of histone H2A for the H2A variant HZT1 leading to transcriptional regulation of selected genes by chromatin remodeling. The polypeptide is Helicase SWR1 (SWR1) (Cryptococcus neoformans var. neoformans serotype D (strain JEC21 / ATCC MYA-565) (Filobasidiella neoformans)).